A 276-amino-acid chain; its full sequence is Chlorophyll a-b binding protein CP29.3, chloroplastic (276 aa).

The N-terminal 29 residues, 1 to 29 (MATTTAAAASGIFGIRIQDPRPGTGRVQA), are a transit peptide targeting the chloroplast. The segment at 1–53 (MATTTAAAASGIFGIRIQDPRPGTGRVQARFGFSFGKKKPAPPPKKSRQVQDD) is disordered. Positions 36–48 (GKKKPAPPPKKSR) are enriched in basic residues. W59 provides a ligand contact to chlorophyll b. F79, E141, and H144 together coordinate chlorophyll a. Residues 147-167 (WAMLGTLGAIAVEALTGIAWQ) form a helical membrane-spanning segment. L181 provides a ligand contact to chlorophyll a. A helical transmembrane segment spans residues 185 to 205 (LPFSLTTLIWIEVLVVGYIEF). Positions 204 and 207 each coordinate chlorophyll b. Positions 242, 245, 247, and 259 each coordinate chlorophyll a. A helical transmembrane segment spans residues 248–268 (LAMVAFLIFALQAAFTGKGPV).

This sequence belongs to the light-harvesting chlorophyll a/b-binding (LHC) protein family. The LHC complex consists of chlorophyll a-b binding proteins. It depends on Binds at least 14 chlorophylls (8 Chl-a and 6 Chl-b) and carotenoids such as lutein and neoxanthin. as a cofactor. Post-translationally, photoregulated by reversible phosphorylation of its threonine residues.

The protein localises to the plastid. It is found in the chloroplast thylakoid membrane. Its function is as follows. The light-harvesting complex (LHC) functions as a light receptor, it captures and delivers excitation energy to photosystems with which it is closely associated. The sequence is that of Chlorophyll a-b binding protein CP29.3, chloroplastic (LHCB4.3) from Arabidopsis thaliana (Mouse-ear cress).